Consider the following 25-residue polypeptide: ATP-dependent 6-phosphofructokinase 2 (25 aa).

An ATP-binding site is contributed by Gly-11.

Belongs to the phosphofructokinase type A (PFKA) family. ATP-dependent PFK group I subfamily. Prokaryotic clade 'B1' sub-subfamily. Homotetramer. Requires Mg(2+) as cofactor.

The protein resides in the cytoplasm. It catalyses the reaction beta-D-fructose 6-phosphate + ATP = beta-D-fructose 1,6-bisphosphate + ADP + H(+). Its pathway is carbohydrate degradation; glycolysis; D-glyceraldehyde 3-phosphate and glycerone phosphate from D-glucose: step 3/4. With respect to regulation, in contrast with PFK1 this enzyme is not affected by phosphoenolpyruvate. In terms of biological role, catalyzes the phosphorylation of D-fructose 6-phosphate to fructose 1,6-bisphosphate by ATP, the first committing step of glycolysis. This is ATP-dependent 6-phosphofructokinase 2 (pfkA2) from Thermus thermophilus (strain ATCC 27634 / DSM 579 / HB8).